The following is a 255-amino-acid chain: H-2 class II histocompatibility antigen, E-D alpha chain (255 aa).

A signal peptide spans 1–25; it reads MATIGALVLRFFFIAVLMSSQKSWA. The alpha-1 stretch occupies residues 26–109; sequence IKEEHTIIQA…ERSNNTPDAN (84 aa). Residues 26 to 216 are Extracellular-facing; the sequence is IKEEHTIIQA…EKTLLPETKE (191 aa). The segment at 110–203 is alpha-2; the sequence is VAPEVTVLSR…GLEEPLRKTW (94 aa). The region spanning 112-204 is the Ig-like C1-type domain; the sequence is PEVTVLSRSP…LEEPLRKTWE (93 aa). Residues Cys132 and Cys188 are joined by a disulfide bond. Residue Asn143 is glycosylated (N-linked (GlcNAc...) asparagine). The segment at 204-216 is connecting peptide; sequence EFEEKTLLPETKE. The chain crosses the membrane as a helical span at residues 217-242; that stretch reads NVMCALGLFVGLVGIVVGIILIMKGI. Over 243-255 the chain is Cytoplasmic; the sequence is KKRNVVERRQGAL.

The protein belongs to the MHC class II family.

It is found in the membrane. This is H-2 class II histocompatibility antigen, E-D alpha chain (H2-Ea) from Mus musculus (Mouse).